The sequence spans 254 residues: Phosphoribosylaminoimidazole-succinocarboxamide synthase (254 aa).

Belongs to the SAICAR synthetase family.

It catalyses the reaction 5-amino-1-(5-phospho-D-ribosyl)imidazole-4-carboxylate + L-aspartate + ATP = (2S)-2-[5-amino-1-(5-phospho-beta-D-ribosyl)imidazole-4-carboxamido]succinate + ADP + phosphate + 2 H(+). It functions in the pathway purine metabolism; IMP biosynthesis via de novo pathway; 5-amino-1-(5-phospho-D-ribosyl)imidazole-4-carboxamide from 5-amino-1-(5-phospho-D-ribosyl)imidazole-4-carboxylate: step 1/2. This Bartonella tribocorum (strain CIP 105476 / IBS 506) protein is Phosphoribosylaminoimidazole-succinocarboxamide synthase.